Here is a 610-residue protein sequence, read N- to C-terminus: E3 ubiquitin-protein ligase hrd-1 (610 aa).

An N-terminal signal peptide occupies residues 1 to 23 (MRVSAGLMIGGSCVATAATILNA). Over 24–41 (FLINKQFYPSIVYLSKSN) the chain is Lumenal. Residues 42-62 (ASMAVIYVQGIVLVYLMFQLL) traverse the membrane as a helical segment. Over 63–99 (KSILFGDLRAAEAEHLSERTWHAVLETCLAFTVFRDD) the chain is Cytoplasmic. Residues 100–120 (FSAIFVMQFIGLLFIKCFHWL) traverse the membrane as a helical segment. The Lumenal portion of the chain corresponds to 121–144 (ADDRVDMMERSPVITLRFHLRMMT). Residues 145–165 (VLAALGFADSYFVSSAYFTTI) traverse the membrane as a helical segment. Residues 166–170 (TRGAS) lie on the Cytoplasmic side of the membrane. The chain crosses the membrane as a helical span at residues 171-191 (AQIVFGFEYAILLALVLHVTI). Residues 192-215 (KYLLHMHDLRNPQSWDNKAVYLLY) lie on the Lumenal side of the membrane. Residues 216 to 236 (AELFINLIRCLLYGFFAVVML) form a helical membrane-spanning segment. Over 237 to 610 (RVHTFPLFSV…ARLLGENANQ (374 aa)) the chain is Cytoplasmic. The RING-type; atypical zinc-finger motif lies at 292 to 333 (CIICREEMTVDASPKRLPCSHVFHAHCLRSWFQRQQTCPTCR). Disordered stretches follow at residues 386 to 408 (QPAGAGGAQPGAAQAGGQPGPFP), 452 to 480 (VNTTQGTSSETPPVNPSYSQLSTEELRRM), and 521 to 610 (RPVV…NANQ). The segment covering 452–474 (VNTTQGTSSETPPVNPSYSQLST) has biased composition (polar residues). Over residues 560–589 (TESPSTSSTAPSTSSPVTASSTPTTSSTRT) the composition is skewed to low complexity.

This sequence belongs to the HRD1 family. In terms of assembly, homodimer.

It is found in the endoplasmic reticulum membrane. The catalysed reaction is S-ubiquitinyl-[E2 ubiquitin-conjugating enzyme]-L-cysteine + [acceptor protein]-L-lysine = [E2 ubiquitin-conjugating enzyme]-L-cysteine + N(6)-ubiquitinyl-[acceptor protein]-L-lysine.. It participates in protein modification; protein ubiquitination. Functionally, acts as an E3 ubiquitin-protein ligase which accepts ubiquitin specifically from endoplasmic reticulum-associated ubc-7 E2 ligase and transfers it to substrates, promoting their degradation. Component of the endoplasmic reticulum quality control (ERQC) system, which is also called the ER-associated degradation (ERAD) system, involved in ubiquitin-dependent degradation of misfolded endoplasmic reticulum proteins. Also promotes the degradation of normal but naturally short-lived proteins. Protects cells from ER stress-induced apoptosis. Thought to play a role together with hsp-3 in developmental growth and function of intestinal cells and to play a role together with hsp-4 in gonad formation. Plays a key role in the degradation of the potassium channel slo-1, perhaps acting directly, in targeting slo-1 to the ER-associated degradation pathway (ERAD), and also indirectly, via activation of the transcription factor skn-1, which mediates proteasomal homeostasis. This is E3 ubiquitin-protein ligase hrd-1 (sel-11) from Caenorhabditis elegans.